We begin with the raw amino-acid sequence, 467 residues long: NADH-ubiquinone oxidoreductase chain 4 (467 aa).

A run of 13 helical transmembrane segments spans residues 21–40 (SMSK…PTLY), 54–74 (MADV…ISNW), 79–99 (STLY…NFMC), 105–125 (FYMY…LYGA), 135–155 (VLMY…LYEV), 168–188 (LVLS…GIAV), 207–227 (PLAG…FAMI), 239–259 (VTYT…TSII), 266–286 (LKVI…LGML), 297–317 (LVLC…VGGM), 330–350 (FQGL…LSFC), 367–387 (LTGA…SVLL), and 420–440 (VLMI…SWVM).

This sequence belongs to the complex I subunit 4 family.

Its subcellular location is the mitochondrion membrane. The enzyme catalyses a ubiquinone + NADH + 5 H(+)(in) = a ubiquinol + NAD(+) + 4 H(+)(out). Functionally, core subunit of the mitochondrial membrane respiratory chain NADH dehydrogenase (Complex I) that is believed to belong to the minimal assembly required for catalysis. Complex I functions in the transfer of electrons from NADH to the respiratory chain. The immediate electron acceptor for the enzyme is believed to be ubiquinone. In Debaryomyces hansenii (strain ATCC 36239 / CBS 767 / BCRC 21394 / JCM 1990 / NBRC 0083 / IGC 2968) (Yeast), this protein is NADH-ubiquinone oxidoreductase chain 4 (ND4).